The sequence spans 438 residues: Adenosylhomocysteinase (438 aa).

The substrate site is built by threonine 64, aspartate 139, and glutamate 164. Residue 165–167 (TTT) coordinates NAD(+). The substrate site is built by lysine 194 and aspartate 198. NAD(+) is bound by residues asparagine 199, 228 to 233 (GYGDVG), glutamate 251, asparagine 286, 307 to 309 (IGH), and asparagine 352.

This sequence belongs to the adenosylhomocysteinase family. NAD(+) is required as a cofactor.

Its subcellular location is the cytoplasm. It carries out the reaction S-adenosyl-L-homocysteine + H2O = L-homocysteine + adenosine. The protein operates within amino-acid biosynthesis; L-homocysteine biosynthesis; L-homocysteine from S-adenosyl-L-homocysteine: step 1/1. In terms of biological role, may play a key role in the regulation of the intracellular concentration of adenosylhomocysteine. This is Adenosylhomocysteinase from Coxiella burnetii (strain Dugway 5J108-111).